Consider the following 115-residue polypeptide: uncharacterized protein (115 aa).

This sequence belongs to the herpesviridae BLRF2 family.

This is an uncharacterized protein from Saimiriine herpesvirus 2 (strain 11) (SaHV-2).